Here is a 251-residue protein sequence, read N- to C-terminus: Hydroxyacylglutathione hydrolase GloB (251 aa).

The Zn(2+) site is built by H53, H55, D57, H58, H110, and D127. Residues 136 to 138 (RLF), 165 to 167 (HEY), and 245 to 248 (RSKK) each bind substrate. Residue H165 coordinates Zn(2+).

It belongs to the metallo-beta-lactamase superfamily. Glyoxalase II family. As to quaternary structure, monomer. It depends on Zn(2+) as a cofactor.

The catalysed reaction is an S-(2-hydroxyacyl)glutathione + H2O = a 2-hydroxy carboxylate + glutathione + H(+). It catalyses the reaction (R)-S-lactoylglutathione + H2O = (R)-lactate + glutathione + H(+). It participates in secondary metabolite metabolism; methylglyoxal degradation; (R)-lactate from methylglyoxal: step 2/2. Its activity is regulated as follows. Is inhibited by Cu(2+). In terms of biological role, type II glyoxalase that catalyzes the hydrolysis of (R)-S-lactoylglutathione to (R)-lactate and glutathione. Is more efficient than the isozyme GloC, and plays a major contribution to methylglyoxal (MG) detoxification in E.coli. The two isoenzymes have additive effects and ensure maximal MG degradation. This Escherichia coli (strain K12) protein is Hydroxyacylglutathione hydrolase GloB.